Here is a 132-residue protein sequence, read N- to C-terminus: Small ribosomal subunit protein uS8 (132 aa).

This sequence belongs to the universal ribosomal protein uS8 family. In terms of assembly, part of the 30S ribosomal subunit. Contacts proteins S5 and S12.

Functionally, one of the primary rRNA binding proteins, it binds directly to 16S rRNA central domain where it helps coordinate assembly of the platform of the 30S subunit. The sequence is that of Small ribosomal subunit protein uS8 from Syntrophotalea carbinolica (strain DSM 2380 / NBRC 103641 / GraBd1) (Pelobacter carbinolicus).